We begin with the raw amino-acid sequence, 947 residues long: Pyruvate, phosphate dikinase 1, chloroplastic (947 aa).

The transit peptide at 1 to 71 (MPSVSRAVCV…PLRAVAAPIP (71 aa)) directs the protein to the chloroplast. The interval 39–60 (RHGKPEVAIRSGSGGSARGGHC) is disordered. Threonine 527 carries the phosphothreonine; by PDRP1 modification. The Tele-phosphohistidine intermediate role is filled by histidine 529. The substrate site is built by arginine 635, arginine 692, glutamate 821, glycine 842, threonine 843, asparagine 844, and aspartate 845. Glutamate 821 contributes to the Mg(2+) binding site. Aspartate 845 lines the Mg(2+) pocket. Cysteine 907 functions as the Proton donor in the catalytic mechanism.

This sequence belongs to the PEP-utilizing enzyme family. Homotetramer. Requires Mg(2+) as cofactor. Post-translationally, phosphorylation of Thr-527 in the dark inactivates the enzyme. Dephosphorylation upon light stimulation reactivates the enzyme. Phosphorylation increases during the first 20 days post-pollination and then remains constant through the 40-day mature seed stage. Reactivation by dephosphorylation during germination is negligible. In terms of tissue distribution, isoform 1 is only expressed in green leaves. Isoform 2 is found in roots, stems, rachis branches, leaf sheaths, green leaves and spikelets. The non-phosphorylated PPDK in mature seeds is endosperm-localized.

Its subcellular location is the plastid. The protein resides in the chloroplast. The protein localises to the cytoplasm. It carries out the reaction pyruvate + phosphate + ATP = phosphoenolpyruvate + AMP + diphosphate + H(+). Its activity is regulated as follows. Activated by light-induced dephosphorylation. Inhibited by dark-induced phosphorylation. Both reactions are catalyzed by PDRP1. In terms of biological role, formation of phosphoenolpyruvate. The cytoplasmic isoform supports the biosynthetic processes in the nascent endosperm and provides an efficient mechanism for glycolytic ATP synthesis in oxygen depleted tissues. May be involved in regulating the flux of carbon into starch and fatty acids of seeds and in the remobilization of nitrogen reserves in senescing leaves. This is Pyruvate, phosphate dikinase 1, chloroplastic (PPDK1) from Oryza sativa subsp. japonica (Rice).